A 2234-amino-acid polypeptide reads, in one-letter code: Bridge-like lipid transfer protein family member 2 (2234 aa).

The N-terminal stretch at 1 to 31 (MPLFLSALLVLLLVALSALFLGRWLVVRLAT) is a signal peptide. Residues 29 to 108 (LATRWCQRKL…LQKVSSLSAP (80 aa)) are transmembrane domain. Ser-563 carries the phosphoserine modification. Residues 1496 to 1529 (QMSAKKPKRGIPPSAQVPPHVSTPSFSGRPDKGS) are disordered. Residues 1814–1885 (ILHLQEAVRQ…LNILIRCFKD (72 aa)) adopt a coiled-coil conformation. A phosphoserine mark is found at Ser-1846 and Ser-2090.

It belongs to the SABRE family.

The protein localises to the cell membrane. The protein resides in the endoplasmic reticulum membrane. Its subcellular location is the mitochondrion membrane. Tube-forming lipid transport protein which binds to phosphatidylinositols and affects phosphatidylinositol-4,5-bisphosphate (PtdIns-4,5-P2) distribution. The protein is Bridge-like lipid transfer protein family member 2 (Bltp2) of Mus musculus (Mouse).